We begin with the raw amino-acid sequence, 881 residues long: Cell wall protein PRY3 (881 aa).

The N-terminal stretch at 1 to 18 is a signal peptide; sequence MLEFPISVLLGCLVAVKA. The region spanning 30-144 is the SCP domain; sequence LNEHNKFRAL…TWNNYIVCSY (115 aa). The N-linked (GlcNAc...) asparagine glycan is linked to Asn101. The segment at 262–313 is disordered; that stretch reads VVSSDATSSTTTTSSVATSSSTTSSDPTSSTAAASSSDPASSSAAASSSAST. Residue Asn360 is glycosylated (N-linked (GlcNAc...) asparagine). 2 disordered regions span residues 381–400 and 453–494; these read AADDIQGSTSKEATSSVSEH and VSST…NSAA. A compositionally biased stretch (polar residues) spans 386-400; sequence QGSTSKEATSSVSEH. Asn488, Asn535, Asn547, and Asn569 each carry an N-linked (GlcNAc...) asparagine glycan. The tract at residues 579 to 611 is disordered; that stretch reads IDPTLDPTDNSASPTDNAKHTSTYGSSSTGASL. Polar residues predominate over residues 585–594; that stretch reads PTDNSASPTD. A compositionally biased stretch (low complexity) spans 599–611; it reads TSTYGSSSTGASL. Asn625 is a glycosylation site (N-linked (GlcNAc...) asparagine). Disordered regions lie at residues 758-788 and 800-830; these read LASDFATSEKPNEPTSVKSTSNEGTSSTTTT and PSSTSLGARTTTGSNGRSTTSQQDGSAMHQP. 2 stretches are compositionally biased toward low complexity: residues 776-788 and 808-820; these read STSNEGTSSTTTT and RTTTGSNGRSTTS. Over residues 821–830 the composition is skewed to polar residues; the sequence is QQDGSAMHQP. Gly853 carries GPI-anchor amidated glycine lipidation. Residues 854–881 constitute a propeptide, removed in mature form; the sequence is AATPLSIFQCNSLAGTIAAFVVAVLFAF.

This sequence belongs to the CRISP family. The GPI-anchor is attached to the protein in the endoplasmic reticulum and serves to target the protein to the cell surface. There, the glucosamine-inositol phospholipid moiety is cleaved off and the GPI-modified mannoprotein is covalently attached via its lipidless GPI glycan remnant to the 1,6-beta-glucan of the outer cell wall layer.

It localises to the secreted. Its subcellular location is the cell wall. It is found in the membrane. In terms of biological role, the full-length isoform (isoform Long) is a daughter cell-specific cell wall protein required for efficient export of lipids such as acetylated sterols. Acts in detoxification of hydrophobic compounds. Involved in tolerance to organic solvents such as dimethyl sulfoxide (DMSO). Also plays a role as an inhibitor of mating. STE12 is utilized as a repressor of full-length PRY3 transcription, ensuring efficient mating. Its function is as follows. There is no evidence that production of the short PRY3 transcript (isoform Short) is anything more than an adventitious by-product of the mechanism responsible for the repression of the full-length transcript. Moreover, no disadvantage is detectable for cells unable to make the short transcript. The polypeptide is Cell wall protein PRY3 (PRY3) (Saccharomyces cerevisiae (strain ATCC 204508 / S288c) (Baker's yeast)).